We begin with the raw amino-acid sequence, 296 residues long: Glycine--tRNA ligase alpha subunit (296 aa).

The protein belongs to the class-II aminoacyl-tRNA synthetase family. In terms of assembly, tetramer of two alpha and two beta subunits.

The protein localises to the cytoplasm. It carries out the reaction tRNA(Gly) + glycine + ATP = glycyl-tRNA(Gly) + AMP + diphosphate. In Parasynechococcus marenigrum (strain WH8102), this protein is Glycine--tRNA ligase alpha subunit.